The primary structure comprises 610 residues: GATOR complex protein NPRL3 (610 aa).

At S437 the chain carries Phosphoserine. The tract at residues 474–501 is disordered; it reads REASEDHSSLASDNIAVQPSSSHKSNFS. Residues 482–501 show a composition bias toward polar residues; the sequence is SLASDNIAVQPSSSHKSNFS.

Belongs to the NPR3 family. As to quaternary structure, component of the GATOR complex consisting of mio, Nup44A/Seh1, Im11, Nplr3, Nplr2, Wdr24, Wdr59 and Sec13. Within the GATOR complex, probable component of the GATOR1 subcomplex which is likely composed of Iml1, Nplr2 and Nplr3. Interacts with Nprl2.

It localises to the cytoplasm. Its subcellular location is the lysosome. An essential component of the GATOR subcomplex GATOR1 which functions as an inhibitor of the amino acid-sensing branch of the TORC1 signaling pathway. The two GATOR subcomplexes, GATOR1 and GATOR2, regulate the TORC1 pathway in order to mediate metabolic homeostasis, female gametogenesis and the response to amino acid limitation and complete starvation. The function of GATOR1 in negatively regulating the TORC1 pathway is essential for maintaining baseline levels of TORC1 activity under nutrient rich conditions, and for promoting survival during amino acid or complete starvation by inhibiting TORC1-dependent cell growth and promoting catabolic metabolism and autophagy. In addition, this inhibition of TORC1 is necessary to maintain female fertility under normal conditions and during periods of nutrient stress. GATOR1 and GATOR2 act at different stages of oogenesis to regulate TORC1 in order to control meiotic entry and promote oocyte growth and development. After exactly four mitotic cyst divisions, the GATOR1 complex members (Iml1, Nprl2 and Nprl3) down-regulate TORC1 to slow cellular metabolism and promote the mitotic/meiotic transition. At later stages of oogenesis, the mio and Nup44A components of the GATOR2 complex inhibit GATOR1 and thus activate TORC1 to promote meiotic progression, and drive oocyte growth and development. This is GATOR complex protein NPRL3 from Drosophila melanogaster (Fruit fly).